The chain runs to 1050 residues: Probable beta-glucosidase E (1050 aa).

Residues 1–87 (MPPPDSNPGS…RSSSTNGGHN (87 aa)) are disordered. The Cytoplasmic segment spans residues 1-174 (MPPPDSNPGS…VKYARIWRRT (174 aa)). A compositionally biased stretch (basic and acidic residues) spans 11 to 20 (FRDHLKHDNK). Residues 47 to 56 (SPRSASASSS) are compositionally biased toward low complexity. Residues 78–87 (RSSSTNGGHN) show a composition bias toward polar residues. Residues 175–195 (LVVVIVALALLVWGFLRFTAA) traverse the membrane as a helical; Signal-anchor for type II membrane protein segment. At 196 to 1050 (QRQGPKVWPM…SRDLPLQAKY (855 aa)) the chain is on the extracellular side. Residues N236, N244, N300, and N430 are each glycosylated (N-linked (GlcNAc...) asparagine). The active site involves D458. Residues N501, N540, N605, N884, N920, N929, and N993 are each glycosylated (N-linked (GlcNAc...) asparagine).

This sequence belongs to the glycosyl hydrolase 3 family.

The protein localises to the cell membrane. It carries out the reaction Hydrolysis of terminal, non-reducing beta-D-glucosyl residues with release of beta-D-glucose.. The protein operates within glycan metabolism; cellulose degradation. Beta-glucosidases are one of a number of cellulolytic enzymes involved in the degradation of cellulosic biomass. Catalyzes the last step releasing glucose from the inhibitory cellobiose. The chain is Probable beta-glucosidase E (bglE) from Aspergillus clavatus (strain ATCC 1007 / CBS 513.65 / DSM 816 / NCTC 3887 / NRRL 1 / QM 1276 / 107).